The primary structure comprises 395 residues: tRNA-specific 2-thiouridylase MnmA (395 aa).

ATP contacts are provided by residues 6–13 and L32; that span reads AMSGGVDS. The Nucleophile role is filled by C101. The cysteines at positions 101 and 193 are disulfide-linked. G125 contacts ATP. An interaction with tRNA region spans residues 143 to 145; it reads KDQ. The active-site Cysteine persulfide intermediate is C193.

This sequence belongs to the MnmA/TRMU family.

It localises to the cytoplasm. It carries out the reaction S-sulfanyl-L-cysteinyl-[protein] + uridine(34) in tRNA + AH2 + ATP = 2-thiouridine(34) in tRNA + L-cysteinyl-[protein] + A + AMP + diphosphate + H(+). Catalyzes the 2-thiolation of uridine at the wobble position (U34) of tRNA, leading to the formation of s(2)U34. This Corynebacterium jeikeium (strain K411) protein is tRNA-specific 2-thiouridylase MnmA.